Here is a 290-residue protein sequence, read N- to C-terminus: 4-hydroxy-tetrahydrodipicolinate synthase (290 aa).

Residue Thr42 coordinates pyruvate. Catalysis depends on Tyr129, which acts as the Proton donor/acceptor. Lys157 serves as the catalytic Schiff-base intermediate with substrate. Ile198 contacts pyruvate.

This sequence belongs to the DapA family. In terms of assembly, homotetramer; dimer of dimers.

The protein localises to the cytoplasm. It carries out the reaction L-aspartate 4-semialdehyde + pyruvate = (2S,4S)-4-hydroxy-2,3,4,5-tetrahydrodipicolinate + H2O + H(+). The protein operates within amino-acid biosynthesis; L-lysine biosynthesis via DAP pathway; (S)-tetrahydrodipicolinate from L-aspartate: step 3/4. Its function is as follows. Catalyzes the condensation of (S)-aspartate-beta-semialdehyde [(S)-ASA] and pyruvate to 4-hydroxy-tetrahydrodipicolinate (HTPA). The sequence is that of 4-hydroxy-tetrahydrodipicolinate synthase from Chlamydia felis (strain Fe/C-56) (Chlamydophila felis).